Reading from the N-terminus, the 1373-residue chain is Capping protein, Arp2/3 and myosin-I linker protein 3 (1373 aa).

Positions 126 to 151 (RGNADTPEGPRDTSPNSETSTSTTHS) are disordered. The segment covering 138–151 (TSPNSETSTSTTHS) has biased composition (low complexity). LRR repeat units follow at residues 242–269 (SGSL…VFGE), 272–299 (SCVL…QLLC), 333–358 (ASSL…ALYS), 390–417 (CSHL…AFKQ), 422–446 (AYTL…LLQG), 453–475 (LSDL…ALQE), 480–507 (VTCI…LGKN), 510–536 (LKHL…LVQL), 541–564 (DCSL…LINA), and 568–591 (NTCL…MLSK). 2 disordered regions span residues 864 to 902 (RTLS…TNID) and 970 to 1373 (LRHQ…PGTD). Positions 981 to 997 (PRTTPPGPGRPSVPVPG) are enriched in pro residues. A compositionally biased stretch (basic and acidic residues) spans 1007–1022 (RLDEGLEDFFSRRVMD). Residues 1047 to 1062 (QKRRRRGLFHFRRPRS) are compositionally biased toward basic residues. Over residues 1078–1097 (LPPPPPPPPTQESPPSPDPP) the composition is skewed to pro residues. Low complexity predominate over residues 1098 to 1108 (SLGNNSSPCWS). Residues 1218–1228 (RRAEATWHIAE) are compositionally biased toward basic and acidic residues. Residues 1232-1243 (PNHSCQSPSPAS) show a composition bias toward polar residues. A compositionally biased stretch (pro residues) spans 1269 to 1278 (PIGPRPPKPV). The span at 1345–1358 (QSCDKLEPDRRRPP) shows a compositional bias: basic and acidic residues.

Belongs to the CARMIL family. Widely expressed, with much higher levels in fetal tissues than in adult ones. Highly expressed in newborn brain.

The protein localises to the cytoplasm. Its subcellular location is the cell membrane. The sequence is that of Capping protein, Arp2/3 and myosin-I linker protein 3 (Carmil3) from Rattus norvegicus (Rat).